Consider the following 222-residue polypeptide: Triosephosphate isomerase (222 aa).

10 to 12 (NCK) contributes to the substrate binding site. The Electrophile role is filled by His93. The Proton acceptor role is filled by Glu141. Residues Ile146, Gly180, and 201–202 (AS) contribute to the substrate site.

It belongs to the triosephosphate isomerase family. Homotetramer; dimer of dimers.

The protein resides in the cytoplasm. It catalyses the reaction D-glyceraldehyde 3-phosphate = dihydroxyacetone phosphate. The protein operates within carbohydrate biosynthesis; gluconeogenesis. It participates in carbohydrate degradation; glycolysis; D-glyceraldehyde 3-phosphate from glycerone phosphate: step 1/1. In terms of biological role, involved in the gluconeogenesis. Catalyzes stereospecifically the conversion of dihydroxyacetone phosphate (DHAP) to D-glyceraldehyde-3-phosphate (G3P). The polypeptide is Triosephosphate isomerase (Cenarchaeum symbiosum (strain A)).